Reading from the N-terminus, the 355-residue chain is Tetraacyldisaccharide 4'-kinase (355 aa).

Residue 48 to 55 participates in ATP binding; that stretch reads SVGGTGKT.

This sequence belongs to the LpxK family.

It carries out the reaction a lipid A disaccharide + ATP = a lipid IVA + ADP + H(+). The protein operates within glycolipid biosynthesis; lipid IV(A) biosynthesis; lipid IV(A) from (3R)-3-hydroxytetradecanoyl-[acyl-carrier-protein] and UDP-N-acetyl-alpha-D-glucosamine: step 6/6. Transfers the gamma-phosphate of ATP to the 4'-position of a tetraacyldisaccharide 1-phosphate intermediate (termed DS-1-P) to form tetraacyldisaccharide 1,4'-bis-phosphate (lipid IVA). The protein is Tetraacyldisaccharide 4'-kinase of Pelodictyon phaeoclathratiforme (strain DSM 5477 / BU-1).